Consider the following 240-residue polypeptide: Terpene cyclase cdmG (240 aa).

Transmembrane regions (helical) follow at residues 16-36 (YASI…LNYG), 48-68 (YGMA…YTVI), 78-98 (IIMT…IKFA), 112-132 (IPFI…ALAA), 134-154 (VGPG…LTIG), and 167-187 (GVSY…VICV). Asparagine 197 is a glycosylation site (N-linked (GlcNAc...) asparagine). The helical transmembrane segment at 205 to 225 (IMKCFSGISLAVEIVYGVTLW) threads the bilayer.

The protein belongs to the paxB family.

It localises to the membrane. It carries out the reaction verruculide C epoxide = 3-hydroxypentacecilide A. The protein operates within secondary metabolite biosynthesis; terpenoid biosynthesis. Functionally, terpene cyclase; part of the gene cluster that mediates the biosynthesis of chrodrimanin B, a meroterpenoid that acts as a potent blocker of insect GABA-gated chloride channels. The first step of the pathway is the biosynthesis of 6-hydroxymellein by the polyketide synthase cdmE. The prenyltransferase cdmH acts as a 6-hydroxymellein 5-farnesyltransferase and produces the hydrophobic metabolite verruculide C. The FAD-dependent monooxygenase cdmI further converts verruculide C into verruculide B. The terpene cyclase cdmG then produced the pentacyclic molecule 3-hydroxypentacecilide A, the backbone structure of chrodrimanin B, via folding the farnesyl moiety of the substrate into the chair-boat conformation. The short-chain dehydrogenase/reductase cdmF functions as the 3-OH dehydrogenase that oxidizes the C-3 hydroxyl group of 3-hydroxypentacecilide A and produces chrodrimanin C, the dehydrogenated product of 3-hydroxypentacecilide A. The cytochrome P450 monooxygenase cdmJ then accepts both 3-hydroxypentacecilide A and chrodrimanin C and functions as a C-7-beta-hydroxylase to produce respectively chrodrimanin H and chrodrimanin F. The dioxygenase cdmA accepts chrodrimanin H to afford chrodrimanin E, which is further transformed to chrodrimanin A by the dioxygenase cdmD. CdmA can also accept chrodrimanin C as substrate to convert it into verruculide A, which is further converted into chrodrimanin T by cdmD. The last step of the biosynthesis is proposed to be performed by the acetyltransferase cdmC which acetylates chrodrimanin A to yield chrodrimanin B. The pathway may also lead to the production of additional shunt products, including chrodrimanins T and U. The chain is Terpene cyclase cdmG from Talaromyces verruculosus (Penicillium verruculosum).